We begin with the raw amino-acid sequence, 306 residues long: Mitochondrial basic amino acids transporter (306 aa).

A run of 6 helical transmembrane segments spans residues 2 to 22 (ALDF…GHPF), 61 to 81 (GLGS…GVQG), 96 to 116 (FLAG…MELA), 153 to 172 (GMVS…FLTY), 187 to 207 (LLVP…WLST), and 255 to 275 (LLRA…VLTY). Solcar repeat units lie at residues 2 to 86 (ALDF…TLRA), 90 to 178 (DSPL…LTRA), and 190 to 275 (PKLL…VLTY). A disordered region spans residues 283–306 (VDSEAAPGASTTPAGPALAQPSSL). Low complexity predominate over residues 287 to 306 (AAPGASTTPAGPALAQPSSL).

It belongs to the mitochondrial carrier (TC 2.A.29) family.

The protein localises to the mitochondrion inner membrane. The catalysed reaction is L-lysine(out) + L-arginine(in) = L-lysine(in) + L-arginine(out). It carries out the reaction L-histidine(out) + L-arginine(in) = L-histidine(in) + L-arginine(out). It catalyses the reaction L-ornithine(in) + L-arginine(out) = L-ornithine(out) + L-arginine(in). The enzyme catalyses L-homoarginine(in) + L-arginine(out) = L-homoarginine(out) + L-arginine(in). The catalysed reaction is N(omega)-methyl-L-arginine(in) + L-arginine(out) = N(omega)-methyl-L-arginine(out) + L-arginine(in). It carries out the reaction L-arginine(in) = L-arginine(out). It catalyses the reaction L-lysine(in) = L-lysine(out). The enzyme catalyses L-ornithine(in) = L-ornithine(out). The catalysed reaction is L-histidine(out) = L-histidine(in). In terms of biological role, mitochondrial transporter of arginine, lysine, homoarginine, methylarginine and, to a much lesser extent, ornithine and histidine. Does not transport carnitine nor acylcarnitines. Functions by both counter-exchange and uniport mechanisms. Plays a physiological role in the import of basic amino acids into mitochondria for mitochondrial protein synthesis and amino acid degradation. This is Mitochondrial basic amino acids transporter (Slc25a29) from Rattus norvegicus (Rat).